A 172-amino-acid polypeptide reads, in one-letter code: Stellate protein CG33247 (172 aa).

This sequence belongs to the casein kinase 2 subunit beta family. In terms of assembly, interacts in vitro with the casein kinase 2 alpha subunit (CkII-alpha). The relevance of such interaction is however unclear in vivo. As to expression, probably not expressed in wild-type flies. In males lacking the Y chromosome, it is testis-specific and constitutes the main component of star-shaped crystals.

Unknown. In males lacking the Y chromosome, its strong overexpression leads to the appearance of proteinaceous star-shaped crystals in the primary spermatocytes causing meiotic drive, possibly by interfering with normal casein kinase 2 activity. The protein is Stellate protein CG33247 (Ste:CG33247) of Drosophila melanogaster (Fruit fly).